A 185-amino-acid chain; its full sequence is Peptidyl-tRNA hydrolase (185 aa).

Y14 serves as a coordination point for tRNA. The active-site Proton acceptor is H19. The tRNA site is built by F64, N66, and N112.

This sequence belongs to the PTH family. As to quaternary structure, monomer.

The protein resides in the cytoplasm. The enzyme catalyses an N-acyl-L-alpha-aminoacyl-tRNA + H2O = an N-acyl-L-amino acid + a tRNA + H(+). In terms of biological role, hydrolyzes ribosome-free peptidyl-tRNAs (with 1 or more amino acids incorporated), which drop off the ribosome during protein synthesis, or as a result of ribosome stalling. Catalyzes the release of premature peptidyl moieties from peptidyl-tRNA molecules trapped in stalled 50S ribosomal subunits, and thus maintains levels of free tRNAs and 50S ribosomes. In Lacticaseibacillus paracasei (strain ATCC 334 / BCRC 17002 / CCUG 31169 / CIP 107868 / KCTC 3260 / NRRL B-441) (Lactobacillus paracasei), this protein is Peptidyl-tRNA hydrolase.